Consider the following 360-residue polypeptide: DNA replication and repair protein RecF (360 aa).

ATP is bound at residue 30–37 (GHNGSGKT).

It belongs to the RecF family.

It localises to the cytoplasm. Functionally, the RecF protein is involved in DNA metabolism; it is required for DNA replication and normal SOS inducibility. RecF binds preferentially to single-stranded, linear DNA. It also seems to bind ATP. The chain is DNA replication and repair protein RecF from Haemophilus ducreyi (strain 35000HP / ATCC 700724).